The sequence spans 570 residues: Putative ABC transporter ATP-binding protein SAV2684 (570 aa).

ABC transporter domains are found at residues Ile6–Glu247 and Leu304–Arg537. Residues Gly40 to Ser47 and Gly338 to Ser345 each bind ATP.

It belongs to the ABC transporter superfamily.

Its subcellular location is the cell membrane. Its function is as follows. Probably part of an ABC transporter complex. Responsible for energy coupling to the transport system. The polypeptide is Putative ABC transporter ATP-binding protein SAV2684 (Staphylococcus aureus (strain Mu50 / ATCC 700699)).